A 586-amino-acid chain; its full sequence is Probable lysosomal cobalamin transporter (586 aa).

9 helical membrane passes run 10–30 (IWIA…VTTF), 47–67 (VVSL…IALV), 96–116 (IVYY…IPFA), 147–167 (SGFI…PAAG), 191–211 (ALTF…VLYT), 315–335 (LVGG…MLIT), 378–398 (IIMA…LATV), 420–440 (ILIA…SIAM), and 509–529 (VFGA…LIVL). The N-linked (GlcNAc...) asparagine glycan is linked to asparagine 540.

It belongs to the LIMR family. LMBRD1 subfamily.

Its subcellular location is the lysosome membrane. In terms of biological role, probable lysosomal cobalamin transporter. Required to export cobalamin from lysosomes allowing its conversion to cofactors. The sequence is that of Probable lysosomal cobalamin transporter from Pyricularia oryzae (strain 70-15 / ATCC MYA-4617 / FGSC 8958) (Rice blast fungus).